We begin with the raw amino-acid sequence, 194 residues long: dTTP/UTP pyrophosphatase (194 aa).

Asp-73 serves as the catalytic Proton acceptor.

The protein belongs to the Maf family. YhdE subfamily. The cofactor is a divalent metal cation.

It localises to the cytoplasm. The enzyme catalyses dTTP + H2O = dTMP + diphosphate + H(+). The catalysed reaction is UTP + H2O = UMP + diphosphate + H(+). Its function is as follows. Nucleoside triphosphate pyrophosphatase that hydrolyzes dTTP and UTP. May have a dual role in cell division arrest and in preventing the incorporation of modified nucleotides into cellular nucleic acids. The protein is dTTP/UTP pyrophosphatase of Clostridium botulinum (strain 657 / Type Ba4).